We begin with the raw amino-acid sequence, 387 residues long: Glutamyl-tRNA reductase 1 (387 aa).

Residues 45-48 (TCNR), Ser96, 101-103 (ETD), and Gln107 each bind substrate. Cys46 (nucleophile) is an active-site residue. Residue 175–180 (GAGSVG) participates in NADP(+) binding.

Belongs to the glutamyl-tRNA reductase family. In terms of assembly, homodimer.

It carries out the reaction (S)-4-amino-5-oxopentanoate + tRNA(Glu) + NADP(+) = L-glutamyl-tRNA(Glu) + NADPH + H(+). It participates in porphyrin-containing compound metabolism; protoporphyrin-IX biosynthesis; 5-aminolevulinate from L-glutamyl-tRNA(Glu): step 1/2. Its function is as follows. Catalyzes the NADPH-dependent reduction of glutamyl-tRNA(Glu) to glutamate 1-semialdehyde (GSA). This is Glutamyl-tRNA reductase 1 from Pyrobaculum arsenaticum (strain DSM 13514 / JCM 11321 / PZ6).